The primary structure comprises 191 residues: LHFPL tetraspan subfamily member 7 protein (191 aa).

The next 4 membrane-spanning stretches (helical) occupy residues 6–26, 72–92, 112–132, and 154–174; these read MGSL…FSLM, IAAV…VLVL, YAQI…PFNL, and LGWG…LPFI.

It belongs to the TMEM211 family.

The protein localises to the membrane. The chain is LHFPL tetraspan subfamily member 7 protein (lhfpl7) from Xenopus tropicalis (Western clawed frog).